The following is a 60-amino-acid chain: MLSNIGVPGLILILVIALVIFGPKKLPEIGRAFGETLREFKKSTKGLRDEVLEELDENKK.

A helical membrane pass occupies residues 1–21; it reads MLSNIGVPGLILILVIALVIF.

Belongs to the TatA/E family. Forms a complex with TatC.

The protein localises to the cell membrane. Functionally, part of the twin-arginine translocation (Tat) system that transports large folded proteins containing a characteristic twin-arginine motif in their signal peptide across membranes. TatA could form the protein-conducting channel of the Tat system. The protein is Sec-independent protein translocase protein TatA of Anoxybacillus flavithermus (strain DSM 21510 / WK1).